A 234-amino-acid chain; its full sequence is MSETSFNLISEKCDILSILRDHPENRIYQRKIQELSKRFTSIRKTKGDGNCFYRALGYSYLESLLGKSREILKFKERVLQTPNDLLAAGFEEHKFRNFFNAFYSVVELVEKDSSVSSLLKVFNDQSSSDRIVQFLRLLTSAFIRNRADFFRHFIDEEMDIKDFCTHEVEPMAMECDHVQITALSQALNIALQVEYVDEMDTALNHHVFPEAAIPSVYLLYKTSHYNILYAAEKH.

Residues 40 to 231 (TSIRKTKGDG…TSHYNILYAA (192 aa)) form the OTU domain. Residue Asp48 is part of the active site. The Nucleophile role is filled by Cys51. Residues His205 and His224 contribute to the active site.

The protein belongs to the peptidase C65 family.

The catalysed reaction is Thiol-dependent hydrolysis of ester, thioester, amide, peptide and isopeptide bonds formed by the C-terminal Gly of ubiquitin (a 76-residue protein attached to proteins as an intracellular targeting signal).. Functionally, hydrolase that can remove conjugated ubiquitin from proteins in vitro and may therefore play an important regulatory role at the level of protein turnover by preventing degradation. Mediates deubiquitination of 'Lys-11'-,'Lys-48'- and 'Lys-63'-linked polyubiquitin chains, with a preference for 'Lys-63'-linked polyubiquitin chains. This Mus musculus (Mouse) protein is Ubiquitin thioesterase OTUB2 (Otub2).